Reading from the N-terminus, the 51-residue chain is Perinerin (51 aa).

Antibacterial activity against both Gram-negative and Gram-positive bacteria. Shows marked activity against P.aeruginosa, B.megaterium, A.viridans, moderate activity against E.coli K-12, S.aureus and M.luteus, and minor activity against P.vulgaris. Antifungal activity against P.heliothis. This Perinereis aibuhitensis (Korean lugworm) protein is Perinerin.